A 136-amino-acid polypeptide reads, in one-letter code: ATP synthase epsilon chain (136 aa).

The tract at residues 112-136 (GNSADKLKAKESLNKARARSQAVGE) is disordered. Basic and acidic residues predominate over residues 116–125 (DKLKAKESLN).

This sequence belongs to the ATPase epsilon chain family. In terms of assembly, F-type ATPases have 2 components, CF(1) - the catalytic core - and CF(0) - the membrane proton channel. CF(1) has five subunits: alpha(3), beta(3), gamma(1), delta(1), epsilon(1). CF(0) has three main subunits: a, b and c.

It is found in the cellular thylakoid membrane. Functionally, produces ATP from ADP in the presence of a proton gradient across the membrane. In Prochlorococcus marinus (strain SARG / CCMP1375 / SS120), this protein is ATP synthase epsilon chain.